Reading from the N-terminus, the 176-residue chain is Shikimate kinase (176 aa).

14 to 19 (GAGKSS) lines the ATP pocket. S18 lines the Mg(2+) pocket. Residues D36, R60, and G82 each contribute to the substrate site. R120 is an ATP binding site. R138 is a substrate binding site.

The protein belongs to the shikimate kinase family. As to quaternary structure, monomer. The cofactor is Mg(2+).

The protein localises to the cytoplasm. It carries out the reaction shikimate + ATP = 3-phosphoshikimate + ADP + H(+). The protein operates within metabolic intermediate biosynthesis; chorismate biosynthesis; chorismate from D-erythrose 4-phosphate and phosphoenolpyruvate: step 5/7. Functionally, catalyzes the specific phosphorylation of the 3-hydroxyl group of shikimic acid using ATP as a cosubstrate. This Dehalococcoides mccartyi (strain ATCC BAA-2266 / KCTC 15142 / 195) (Dehalococcoides ethenogenes (strain 195)) protein is Shikimate kinase.